Here is a 623-residue protein sequence, read N- to C-terminus: MGLVLKQFNRKIRTALILAPLFTFAQIIIDLIIPSFLASAIAVVFSIVTLKQKEASGEGVAVDFIAESKLSFQSVQEAQIVLATSVILLALFGLVFGLISIFCASIVAGNTSYFLRRKIFRKIMHITAPSHDQYGSSTLLVRLTNDVYLMEIMTFDFLRLIVRAPFLFIGGLAFAIATNSDMSISLAITFPLTFLVIGILNKKSTPLFKNNQKSVDQINERVEEDVSGYKVVQSFNLKDTECLKFKAANARWTKSSTNSLFVNTLNIPFTFFFSSMTIIIALLLVFQLDNSVRVDPLPDNAAIRPSIFAFFQYNFYIVLGLILTSLTMVNFTRSRVALGRIKDVLNKPEIQQHVVPDQTVLAPSLEFKNVAFGLGNKENRDFLQDLNFKFEAGKTYGIVGPTGSGKSLIANIIGGLYEPNQGEIFVGGQSIKTIDSDYLAKMIGIVFQQNILFKGTIASNIKIGLETREDWKHEPDSKKDAAMKRAAAIACADTFIEKFSDTYDHTVEQLGKNLSGGQKQRVAIARTVITKPQILVLDDSMSALDALTEKKVRENIANELPGTTKIIISQNINSIKYAHKIMVIDNGRIAGFDSDAKLMQSCDIYVKMKQAQKDQGGDFDAVA.

The 310-residue stretch at 16 to 325 (LILAPLFTFA…YIVLGLILTS (310 aa)) folds into the ABC transmembrane type-1 domain. 6 helical membrane-spanning segments follow: residues 27-47 (IIIDLIIPSFLASAIAVVFSI), 86-106 (VILLALFGLVFGLISIFCASI), 157-177 (FLRLIVRAPFLFIGGLAFAIA), 180-200 (SDMSISLAITFPLTFLVIGIL), 266-286 (NIPFTFFFSSMTIIIALLLVF), and 307-327 (IFAFFQYNFYIVLGLILTSLT). The ABC transporter domain maps to 365–611 (LEFKNVAFGL…CDIYVKMKQA (247 aa)). 400-407 (GPTGSGKS) contributes to the ATP binding site.

It belongs to the ABC transporter superfamily.

It localises to the cell membrane. This Mycoplasma pneumoniae (strain ATCC 29342 / M129 / Subtype 1) (Mycoplasmoides pneumoniae) protein is Putative ABC transporter ATP-binding protein MG014 homolog.